Consider the following 110-residue polypeptide: Parvalbumin alpha (110 aa).

S2 carries the N-acetylserine modification. Phosphoserine is present on residues S2 and S24. EF-hand domains follow at residues 39 to 74 (KSPE…FSPD) and 78 to 110 (LSVK…VAES). Ca(2+) contacts are provided by D52, D54, S56, F58, E60, E63, D91, D93, D95, K97, and E102.

It belongs to the parvalbumin family.

In terms of biological role, in muscle, parvalbumin is thought to be involved in relaxation after contraction. It binds two calcium ions. This Bos taurus (Bovine) protein is Parvalbumin alpha (PVALB).